Consider the following 548-residue polypeptide: Probable malate:quinone oxidoreductase (548 aa).

A disordered region spans residues 521 to 548 (DKPQAADSTPKPQLKPQPVQKEVADIAL). A compositionally biased stretch (low complexity) spans 530 to 541 (PKPQLKPQPVQK).

Belongs to the MQO family. It depends on FAD as a cofactor.

The enzyme catalyses (S)-malate + a quinone = a quinol + oxaloacetate. It participates in carbohydrate metabolism; tricarboxylic acid cycle; oxaloacetate from (S)-malate (quinone route): step 1/1. This Shigella sonnei (strain Ss046) protein is Probable malate:quinone oxidoreductase.